Here is a 347-residue protein sequence, read N- to C-terminus: Farnesyl pyrophosphate synthase ERG20 (347 aa).

Isopentenyl diphosphate is bound by residues K50, R53, and Q88. Mg(2+)-binding residues include D95 and D99. Position 104 (R104) interacts with dimethylallyl diphosphate. Residue R105 participates in isopentenyl diphosphate binding. 5 residues coordinate dimethylallyl diphosphate: K192, T193, Q232, K249, and K258.

The protein belongs to the FPP/GGPP synthase family. Requires Mg(2+) as cofactor.

It catalyses the reaction isopentenyl diphosphate + dimethylallyl diphosphate = (2E)-geranyl diphosphate + diphosphate. The catalysed reaction is isopentenyl diphosphate + (2E)-geranyl diphosphate = (2E,6E)-farnesyl diphosphate + diphosphate. The protein operates within isoprenoid biosynthesis; farnesyl diphosphate biosynthesis; farnesyl diphosphate from geranyl diphosphate and isopentenyl diphosphate: step 1/1. It participates in isoprenoid biosynthesis; geranyl diphosphate biosynthesis; geranyl diphosphate from dimethylallyl diphosphate and isopentenyl diphosphate: step 1/1. Its function is as follows. Farnesyl pyrophosphate synthase; part of the second module of ergosterol biosynthesis pathway that includes the middle steps of the pathway. ERG20 catalyzes the sequential condensation of isopentenyl pyrophosphate with dimethylallyl pyrophosphate, and then with the resultant geranylpyrophosphate to the ultimate product farnesyl pyrophosphate. The second module is carried out in the vacuole and involves the formation of farnesyl diphosphate, which is also an important intermediate in the biosynthesis of ubiquinone, dolichol, heme and prenylated proteins. Activity by the mevalonate kinase ERG12 (FG05912) first converts mevalonate into 5-phosphomevalonate. 5-phosphomevalonate is then further converted to 5-diphosphomevalonate by the phosphomevalonate kinase ERG8 (FG09764). The diphosphomevalonate decarboxylase ERG19 (FG10424) then produces isopentenyl diphosphate. The isopentenyl-diphosphate delta-isomerase IDI1 (FG09722) then catalyzes the 1,3-allylic rearrangement of the homoallylic substrate isopentenyl (IPP) to its highly electrophilic allylic isomer, dimethylallyl diphosphate (DMAPP). Finally the farnesyl diphosphate synthase ERG20 (FG06784) catalyzes the sequential condensation of isopentenyl pyrophosphate with dimethylallyl pyrophosphate, and then with the resultant geranylpyrophosphate to the ultimate product farnesyl pyrophosphate. The sequence is that of Farnesyl pyrophosphate synthase ERG20 from Gibberella zeae (strain ATCC MYA-4620 / CBS 123657 / FGSC 9075 / NRRL 31084 / PH-1) (Wheat head blight fungus).